A 62-amino-acid polypeptide reads, in one-letter code: DNA-directed RNA polymerase subunit Rpo10 (62 aa).

Zn(2+)-binding residues include Cys-6, Cys-9, Cys-43, and Cys-44.

Belongs to the archaeal Rpo10/eukaryotic RPB10 RNA polymerase subunit family. Part of the RNA polymerase complex. Zn(2+) is required as a cofactor.

Its subcellular location is the cytoplasm. The catalysed reaction is RNA(n) + a ribonucleoside 5'-triphosphate = RNA(n+1) + diphosphate. In terms of biological role, DNA-dependent RNA polymerase (RNAP) catalyzes the transcription of DNA into RNA using the four ribonucleoside triphosphates as substrates. The sequence is that of DNA-directed RNA polymerase subunit Rpo10 from Methanoregula boonei (strain DSM 21154 / JCM 14090 / 6A8).